A 330-amino-acid chain; its full sequence is PTS system mannose-specific EIIAB component (330 aa).

In terms of domain architecture, PTS EIIA type-4 spans 2-130; the sequence is GIGIIIASHG…NIIKESKDGI (129 aa). Histidine 10 functions as the Tele-phosphohistidine intermediate; for EIIA activity in the catalytic mechanism. Histidine 10 carries the post-translational modification Phosphohistidine; by HPr. Residues 143 to 161 form a hinge region; that stretch reads TAATEKVVNALQGAIPAGT. One can recognise a PTS EIIB type-4 domain in the interval 166-330; the sequence is GKLKINLARV…FELIQKANIK (165 aa). Histidine 181 acts as the Pros-phosphohistidine intermediate; for EIIB activity in catalysis. Histidine 181 is subject to Phosphohistidine; by EIIA.

Homodimer.

The protein resides in the cytoplasm. Its subcellular location is the cell membrane. The enzyme catalyses D-mannose(out) + N(pros)-phospho-L-histidyl-[protein] = D-mannose 6-phosphate(in) + L-histidyl-[protein]. Its function is as follows. The phosphoenolpyruvate-dependent sugar phosphotransferase system (sugar PTS), a major carbohydrate active transport system, catalyzes the phosphorylation of incoming sugar substrates concomitantly with their translocation across the cell membrane. The enzyme II ManXYZ PTS system is involved in mannose transport. The sequence is that of PTS system mannose-specific EIIAB component from Streptococcus pyogenes serotype M6 (strain ATCC BAA-946 / MGAS10394).